The chain runs to 125 residues: Succinate dehydrogenase assembly factor 3, mitochondrial (125 aa).

The N-terminal 30 residues, 1–30 (MPGRHVSRVRALYKRVLQLHRVLPPDLKSL), are a transit peptide targeting the mitochondrion.

The protein belongs to the complex I LYR family. SDHAF3 subfamily. Interacts with SDHB within an SDHA-SDHB subcomplex.

It localises to the mitochondrion matrix. Its function is as follows. Plays an essential role in the assembly of succinate dehydrogenase (SDH), an enzyme complex (also referred to as respiratory complex II) that is a component of both the tricarboxylic acid (TCA) cycle and the mitochondrial electron transport chain, and which couples the oxidation of succinate to fumarate with the reduction of ubiquinone (coenzyme Q) to ubiquinol. Promotes maturation of the iron-sulfur protein subunit SDHB of the SDH catalytic dimer, protecting it from the deleterious effects of oxidants. May act together with SDHAF1. The polypeptide is Succinate dehydrogenase assembly factor 3, mitochondrial (Homo sapiens (Human)).